The sequence spans 216 residues: MTATRNVKGLLGTKLGMTQVWDENNKLIPVTVVQADSNVITQLRNAEVDGYVAVQIGYGQIDPRKVTKPLAGHFEKAGVTPRRHVVELRTADAAEYELGQELSVELFAAGQKIDVIGTTKGKGFAGVMKRHGFHGVGASHGAHKNHRKPGSIGGASTPSRVFKGMKMAGRMGAVRHTTLNLTVHAVDAEKSLLLIKGAVPGARGQVVFVRTAVKGA.

The segment at 137–158 (GASHGAHKNHRKPGSIGGASTP) is disordered.

The protein belongs to the universal ribosomal protein uL3 family. Part of the 50S ribosomal subunit. Forms a cluster with proteins L14 and L19.

Functionally, one of the primary rRNA binding proteins, it binds directly near the 3'-end of the 23S rRNA, where it nucleates assembly of the 50S subunit. The chain is Large ribosomal subunit protein uL3 from Pseudarthrobacter chlorophenolicus (strain ATCC 700700 / DSM 12829 / CIP 107037 / JCM 12360 / KCTC 9906 / NCIMB 13794 / A6) (Arthrobacter chlorophenolicus).